The sequence spans 594 residues: Zinc finger protein 467 (594 aa).

Residues 1–70 (MRETLEALNS…HTEQAEAPCM (70 aa)) form a disordered region. Residue lysine 97 forms a Glycyl lysine isopeptide (Lys-Gly) (interchain with G-Cter in SUMO2) linkage. 12 consecutive C2H2-type zinc fingers follow at residues 160–182 (YGCEECERRFRDQLTLRLHQRLH), 188–210 (CACPDCGRSFTQRAHMLLHQRSH), 216–238 (FPCSECDKRFSKKAHLTRHLRTH), 244–266 (YPCAECGKRFSQKIHLGSHQKTH), 272–294 (FPCTECEKRFRKKTHLIRHQRIH), 300–322 (YQCTQCTRSFTHKQHLVRHQRVH), 355–377 (FACSHCGQSFGWKKNLATHQSLH), 430–452 (FFCPDCGRGFAHGQHLARHRRVH), 458–480 (FACAQCGRRFGSRPNLVAHSRAH), 486–508 (FACAQCGRRFSRKSHLGRHQAVH), 514–536 (HACAVCARCFSSKTNLVRHQAIH), and 542–564 (FSCPQCAKSFSRKTHLVRHQRIH). Residues 313-350 (QHLVRHQRVHDAASRTRSSPDIPATPHPPTASLAPSPT) are disordered. Lysine 368 participates in a covalent cross-link: Glycyl lysine isopeptide (Lys-Gly) (interchain with G-Cter in SUMO2).

It belongs to the krueppel C2H2-type zinc-finger protein family. As to quaternary structure, interacts with STAT3. Enhances STAT3 activity by keeping it in the nucleus.

Its subcellular location is the nucleus. Transcription factor that promotes adipocyte differentiation and suppresses osteoblast differentiation in the bone marrow. Enhances the osteoclast-supporting ability of stromal cells. Binds with STAT3 the consensus sequence 5'-CTTCTGGGAAGA-3' of the acute phase response element (APRE). Transactivates several promoters including FOS, OSM and PPARG. Recruits a histone deacetylase complex. This Rattus norvegicus (Rat) protein is Zinc finger protein 467 (Znf467).